The following is an 84-amino-acid chain: LYR motif-containing protein 4B (84 aa).

It belongs to the complex I LYR family.

This is LYR motif-containing protein 4B (lyrm4b) from Salmo salar (Atlantic salmon).